Here is a 434-residue protein sequence, read N- to C-terminus: O-phosphoseryl-tRNA(Sec) selenium transferase (434 aa).

The interval 1–40 (MGLNITGLIPKHMENRGKLTLKENLKIIENILEQRKAPEN) is tetramerization. Pyridoxal 5'-phosphate is bound at residue Arg71. A phosphate loop (P-loop) region spans residues 92–102 (GRSGNLIDPQP). Residues Arg93, Ser94, and Gln101 each contribute to the substrate site. Lys277 is modified (N6-(pyridoxal phosphate)lysine). Arg306 lines the substrate pocket.

It belongs to the SepSecS family. As to quaternary structure, homotetramer. Pyridoxal 5'-phosphate is required as a cofactor.

The catalysed reaction is O-phospho-L-seryl-tRNA(Sec) + selenophosphate + H2O = L-selenocysteinyl-tRNA(Sec) + 2 phosphate. Its pathway is aminoacyl-tRNA biosynthesis; selenocysteinyl-tRNA(Sec) biosynthesis; selenocysteinyl-tRNA(Sec) from L-seryl-tRNA(Sec) (archaeal/eukaryal route): step 2/2. In terms of biological role, converts O-phosphoseryl-tRNA(Sec) to selenocysteinyl-tRNA(Sec) required for selenoprotein biosynthesis. The polypeptide is O-phosphoseryl-tRNA(Sec) selenium transferase (spcS) (Methanocaldococcus jannaschii (strain ATCC 43067 / DSM 2661 / JAL-1 / JCM 10045 / NBRC 100440) (Methanococcus jannaschii)).